The primary structure comprises 126 residues: Small ribosomal subunit protein uS13 (126 aa).

The disordered stretch occupies residues 95–126 (GMPVRGQRTRTNARTRRGRRGQAIGIKKKVKK).

The protein belongs to the universal ribosomal protein uS13 family. As to quaternary structure, part of the 30S ribosomal subunit. Forms a loose heterodimer with protein S19. Forms two bridges to the 50S subunit in the 70S ribosome.

Its function is as follows. Located at the top of the head of the 30S subunit, it contacts several helices of the 16S rRNA. In the 70S ribosome it contacts the 23S rRNA (bridge B1a) and protein L5 of the 50S subunit (bridge B1b), connecting the 2 subunits; these bridges are implicated in subunit movement. Contacts the tRNAs in the A and P-sites. The polypeptide is Small ribosomal subunit protein uS13 (Chloroflexus aggregans (strain MD-66 / DSM 9485)).